Consider the following 380-residue polypeptide: MASLRKTHPLLKIVNDALIDLPAPANISVWWNFGSLLGLCLLTQILTGLFLAMHYTSDIATAFSSVAHICRDVNYGWLIRNFHANGASFFFICLYLHIGRGLYYGSYLYKETWNVGVVLFLLVMMTAFVGYVLPWGQMSFWGATVITNLLSAVPYVGDILVQWIWGGFSVDNATLTRFFAFHFLFPFIIAAMTILHFLFLHETGSNNPAGLNSDADKVSFHPYFSYKDLLGFVVMLLALSTLSLFSPNLLGDPDNFIPANPLVTPPHIKPEWYFLFAYAILRSIPNKLGGVLALLSSILILMLVPILHTSKQRGLTFRPLTQILFWVLVADVAILTWIGGMPVEHPFIIVGQVASVLYFALFLVIMPTTGWMENKALKWN.

A run of 4 helical transmembrane segments spans residues 33–53 (FGSL…FLAM), 77–98 (WLIR…YLHI), 113–133 (WNVG…GYVL), and 178–198 (FFAF…LHFL). Heme b is bound by residues H83 and H97. Residues H182 and H196 each contribute to the heme b site. H201 lines the a ubiquinone pocket. 4 helical membrane-spanning segments follow: residues 226 to 246 (YKDL…SLFS), 288 to 308 (LGGV…PILH), 320 to 340 (LTQI…WIGG), and 347 to 367 (FIIV…VIMP).

The protein belongs to the cytochrome b family. As to quaternary structure, the cytochrome bc1 complex contains 3 respiratory subunits (MT-CYB, CYC1 and UQCRFS1), 2 core proteins (UQCRC1 and UQCRC2) and probably 6 low-molecular weight proteins. Heme b serves as cofactor.

Its subcellular location is the mitochondrion inner membrane. Functionally, component of the ubiquinol-cytochrome c reductase complex (complex III or cytochrome b-c1 complex) that is part of the mitochondrial respiratory chain. The b-c1 complex mediates electron transfer from ubiquinol to cytochrome c. Contributes to the generation of a proton gradient across the mitochondrial membrane that is then used for ATP synthesis. In Zeus faber (John Dory), this protein is Cytochrome b (mt-cyb).